The primary structure comprises 236 residues: Small ribosomal subunit protein uS5 (236 aa).

The 64-residue stretch at 61 to 124 folds into the S5 DRBM domain; sequence ENQEILDIAL…NYAKLNIIEI (64 aa).

This sequence belongs to the universal ribosomal protein uS5 family. In terms of assembly, part of the 30S ribosomal subunit. Contacts protein S4.

Functionally, with S4 and S12 plays an important role in translational accuracy. This chain is Small ribosomal subunit protein uS5, found in Pyrococcus abyssi (strain GE5 / Orsay).